A 90-amino-acid polypeptide reads, in one-letter code: Co-chaperonin GroES (90 aa).

It belongs to the GroES chaperonin family. Heptamer of 7 subunits arranged in a ring. Interacts with the chaperonin GroEL.

The protein localises to the cytoplasm. Functionally, together with the chaperonin GroEL, plays an essential role in assisting protein folding. The GroEL-GroES system forms a nano-cage that allows encapsulation of the non-native substrate proteins and provides a physical environment optimized to promote and accelerate protein folding. GroES binds to the apical surface of the GroEL ring, thereby capping the opening of the GroEL channel. This chain is Co-chaperonin GroES, found in Thermosipho melanesiensis (strain DSM 12029 / CIP 104789 / BI429).